A 184-amino-acid chain; its full sequence is Peptidyl-tRNA hydrolase (184 aa).

Residue Tyr-14 participates in tRNA binding. The active-site Proton acceptor is His-19. TRNA-binding residues include Phe-64, Asn-66, and Asn-112.

The protein belongs to the PTH family. In terms of assembly, monomer.

The protein resides in the cytoplasm. The enzyme catalyses an N-acyl-L-alpha-aminoacyl-tRNA + H2O = an N-acyl-L-amino acid + a tRNA + H(+). In terms of biological role, hydrolyzes ribosome-free peptidyl-tRNAs (with 1 or more amino acids incorporated), which drop off the ribosome during protein synthesis, or as a result of ribosome stalling. Its function is as follows. Catalyzes the release of premature peptidyl moieties from peptidyl-tRNA molecules trapped in stalled 50S ribosomal subunits, and thus maintains levels of free tRNAs and 50S ribosomes. The protein is Peptidyl-tRNA hydrolase of Thermoanaerobacter sp. (strain X514).